Reading from the N-terminus, the 211-residue chain is Thiamine-phosphate synthase (211 aa).

4-amino-2-methyl-5-(diphosphooxymethyl)pyrimidine-binding positions include 37–41 (QLRIK) and Asn69. Asp70 and Asp89 together coordinate Mg(2+). Ser108 provides a ligand contact to 4-amino-2-methyl-5-(diphosphooxymethyl)pyrimidine. A 2-[(2R,5Z)-2-carboxy-4-methylthiazol-5(2H)-ylidene]ethyl phosphate-binding site is contributed by 134–136 (TQT). Lys137 is a binding site for 4-amino-2-methyl-5-(diphosphooxymethyl)pyrimidine. 2-[(2R,5Z)-2-carboxy-4-methylthiazol-5(2H)-ylidene]ethyl phosphate contacts are provided by residues Gly166 and 186 to 187 (VS).

It belongs to the thiamine-phosphate synthase family. Mg(2+) serves as cofactor.

The catalysed reaction is 2-[(2R,5Z)-2-carboxy-4-methylthiazol-5(2H)-ylidene]ethyl phosphate + 4-amino-2-methyl-5-(diphosphooxymethyl)pyrimidine + 2 H(+) = thiamine phosphate + CO2 + diphosphate. It carries out the reaction 2-(2-carboxy-4-methylthiazol-5-yl)ethyl phosphate + 4-amino-2-methyl-5-(diphosphooxymethyl)pyrimidine + 2 H(+) = thiamine phosphate + CO2 + diphosphate. The enzyme catalyses 4-methyl-5-(2-phosphooxyethyl)-thiazole + 4-amino-2-methyl-5-(diphosphooxymethyl)pyrimidine + H(+) = thiamine phosphate + diphosphate. It functions in the pathway cofactor biosynthesis; thiamine diphosphate biosynthesis; thiamine phosphate from 4-amino-2-methyl-5-diphosphomethylpyrimidine and 4-methyl-5-(2-phosphoethyl)-thiazole: step 1/1. In terms of biological role, condenses 4-methyl-5-(beta-hydroxyethyl)thiazole monophosphate (THZ-P) and 2-methyl-4-amino-5-hydroxymethyl pyrimidine pyrophosphate (HMP-PP) to form thiamine monophosphate (TMP). In Enterobacter sp. (strain 638), this protein is Thiamine-phosphate synthase.